The chain runs to 609 residues: uncharacterized protein (609 aa).

This sequence belongs to the NodU/CmcH family.

This is an uncharacterized protein from Methanocaldococcus jannaschii (strain ATCC 43067 / DSM 2661 / JAL-1 / JCM 10045 / NBRC 100440) (Methanococcus jannaschii).